A 241-amino-acid chain; its full sequence is Thiamine import ATP-binding protein ThiQ (241 aa).

In terms of domain architecture, ABC transporter spans 7-235 (IRLSDVRFSY…AGPEALRHYI (229 aa)). 37–44 (GPSGSGKS) contributes to the ATP binding site.

It belongs to the ABC transporter superfamily. Thiamine importer (TC 3.A.1.19.1) family. The complex is composed of two ATP-binding proteins (ThiQ), two transmembrane proteins (ThiP) and a solute-binding protein (ThiB).

It is found in the cell inner membrane. The catalysed reaction is thiamine(out) + ATP + H2O = thiamine(in) + ADP + phosphate + H(+). Functionally, part of the ABC transporter complex ThiBPQ involved in thiamine import. Responsible for energy coupling to the transport system. This Brucella melitensis biotype 1 (strain ATCC 23456 / CCUG 17765 / NCTC 10094 / 16M) protein is Thiamine import ATP-binding protein ThiQ.